Consider the following 391-residue polypeptide: MIPEQTNHVVSTIENLPAESISASPGPLHRMRNVFSREMLLSVALGQVLSLLICGIRLTSKYLSEDFHANTPLFQSFLNYILLFLVYTTTLAVRQGEENLLAILKRRWWKYMFLGIIDIEATYLVVKAHQYTTFISIQLLNCFVIPVVILLSWFFLLVRYKVLHFIGAIACILGIGCMAGADVLMGRQQKGDFYPGDSKLIGDVLVLGGATLYGISSVCQEYIVRNLSRVELLGMIGLFGSFFSGIQLAIMEHKELLKVPWDWQIGLLYVGFTACMFGLYSFMPVVIKKTSATAINLSMLTAELYTFFCGLFLFHYKFSGLYLLSFFTILLGLVFYFSTNTYVAQDPRVYKQFRNPSGPVVELPSSGQLEPSVTYTSLSQETEEEPRVRVA.

The next 10 helical transmembrane spans lie at 39 to 59 (MLLS…IRLT), 73 to 93 (LFQS…TLAV), 108 to 128 (WWKY…VVKA), 137 to 157 (IQLL…FFLL), 165 to 185 (FIGA…DVLM), 200 to 220 (LIGD…SVCQ), 230 to 250 (VELL…QLAI), 267 to 287 (LLYV…PVVI), 294 to 314 (AINL…LFLF), and 318 to 338 (FSGL…FYFS). A disordered region spans residues 361–391 (VELPSSGQLEPSVTYTSLSQETEEEPRVRVA). The span at 365 to 380 (SSGQLEPSVTYTSLSQ) shows a compositional bias: polar residues.

This sequence belongs to the SLC35F solute transporter family.

It is found in the membrane. Its function is as follows. Putative solute transporter. The chain is Solute carrier family 35 member F2 (slc35f2) from Xenopus tropicalis (Western clawed frog).